The primary structure comprises 344 residues: UDP-galactose/UDP-glucose transporter 5B (344 aa).

8 helical membrane passes run 16-36, 56-76, 115-135, 142-162, 176-196, 220-240, 246-266, and 292-312; these read LWKG…YGVL, LFLV…ALLA, VQTL…TLIM, FDYL…LFPA, TVWG…TSTF, CVLS…VDFV, CLLD…FISY, and CIWF…IVFG. Residues 324 to 344 are disordered; that stretch reads KNSQTQPPPPELPQYEKVESS.

It belongs to the nucleotide-sugar transporter family. UDP-galactose:UMP antiporter (TC 2.A.7.11) subfamily.

The protein localises to the membrane. Its function is as follows. Sugar transporter involved in the transport of nucleotide-sugars from cytoplasm into the Golgi and/or the endoplasmic reticulum. The polypeptide is UDP-galactose/UDP-glucose transporter 5B (Arabidopsis thaliana (Mouse-ear cress)).